The primary structure comprises 172 residues: Single-stranded DNA-binding protein A (172 aa).

The SSB domain occupies 1 to 104 (MLNRVVLVGR…VQAESVQFLE (104 aa)). Tyr-82 bears the Phosphotyrosine mark. The interval 103–172 (LEPKNGGGSG…IDISDDDLPF (70 aa)) is disordered. The span at 107-131 (NGGGSGSGGYNEGNSGGGQYFGGGQ) shows a compositional bias: gly residues. Positions 132 to 149 (NDNPFGGNQNNQRRNQGN) are enriched in low complexity. The Important for interaction with partner proteins signature appears at 167–172 (DDDLPF).

In terms of assembly, homotetramer. Interacts with proteins involved in DNA metabolism such as PriA, RecQ, RecG, RecS, DnaE, RarA, RecJ, RecO, SbcC, RecD2 (formerly YrrC), XseA and Ung. Interacts with RecQ via its 10 C-terminal residues. Interacts with RecD2. Post-translationally, phosphorylated by YwqD, which increases ssDNA affinity; dephosphorylated by YwqE.

It is found in the cytoplasm. The protein resides in the nucleoid. Functionally, plays an important role in DNA replication, recombination and repair. Binds to single-stranded (ss)DNA and to an array of partner proteins to recruit them to their sites of action during DNA metabolism. Associates with oriC, this requires DnaA. SsbA binding to ssDNA prevents DnaB and DnaD individually from binding to DNA. Has a 20-fold higher affinity for ssDNA than SsbB; SsbA and DprA activate the homologous DNA strand exchange function of RecA-ATP. Enhances the activity of 3'-5' DNA helicase RecQ. In Bacillus subtilis (strain 168), this protein is Single-stranded DNA-binding protein A (ssbA).